The following is a 65-amino-acid chain: DNA-directed RNA polymerase subunit Rpo10 (65 aa).

Zn(2+) contacts are provided by C7, C10, C44, and C45.

The protein belongs to the archaeal Rpo10/eukaryotic RPB10 RNA polymerase subunit family. In terms of assembly, part of the RNA polymerase complex. Zn(2+) is required as a cofactor.

The protein resides in the cytoplasm. It is found in the chromosome. The catalysed reaction is RNA(n) + a ribonucleoside 5'-triphosphate = RNA(n+1) + diphosphate. DNA-dependent RNA polymerase (RNAP) catalyzes the transcription of DNA into RNA using the four ribonucleoside triphosphates as substrates. The polypeptide is DNA-directed RNA polymerase subunit Rpo10 (Thermococcus kodakarensis (strain ATCC BAA-918 / JCM 12380 / KOD1) (Pyrococcus kodakaraensis (strain KOD1))).